The chain runs to 2034 residues: Sperm vesicle fusion protein fer-1 (2034 aa).

A disordered region spans residues 1–80; the sequence is MTVKEKLLKV…GGSDIELLPD (80 aa). Over 1-1998 the chain is Cytoplasmic; that stretch reads MTVKEKLLKV…CIKYFWHYYG (1998 aa). Residues 66–79 show a composition bias toward acidic residues; the sequence is ELSDDGGSDIELLP. C2 domains follow at residues 229-367, 954-1082, 1120-1246, and 1363-1484; these read RIDE…YLPT, DSED…PQWF, YKER…KSDH, and KKGK…ATGG. The tract at residues 1563 to 1619 is disordered; the sequence is QKAGKENFSDGSDQQNEDVSDGSWDEEDLEREKEKLKWEKHRSKGKPLKKVTTEKAE. Residues 1577-1591 show a composition bias toward acidic residues; it reads QNEDVSDGSWDEEDL. Basic residues predominate over residues 1600–1611; the sequence is WEKHRSKGKPLK. The C2 5 domain maps to 1684–1831; that stretch reads EYGAIPAPFN…EGIGSPSDVG (148 aa). A disordered region spans residues 1953-1972; it reads QEPAGKKRSEPNHSPFLEKP. A helical transmembrane segment spans residues 1999-2019; it reads LQILLWLIIIVILILTIFVLL. Residues 2020 to 2034 are Extracellular-facing; sequence HTWPTILAEIIKAIF.

This sequence belongs to the ferlin family. In terms of tissue distribution, exclusively expressed in the testis.

The protein localises to the membrane. In terms of biological role, required for the fusion of the membranous organelles (MOs) with the plasma membrane, a process essential in spermiogenesis. The protein is Sperm vesicle fusion protein fer-1 (fer-1) of Caenorhabditis elegans.